Here is a 318-residue protein sequence, read N- to C-terminus: Methionyl-tRNA formyltransferase (318 aa).

Residue 112-115 (SILP) participates in (6S)-5,6,7,8-tetrahydrofolate binding.

This sequence belongs to the Fmt family.

The enzyme catalyses L-methionyl-tRNA(fMet) + (6R)-10-formyltetrahydrofolate = N-formyl-L-methionyl-tRNA(fMet) + (6S)-5,6,7,8-tetrahydrofolate + H(+). Its function is as follows. Attaches a formyl group to the free amino group of methionyl-tRNA(fMet). The formyl group appears to play a dual role in the initiator identity of N-formylmethionyl-tRNA by promoting its recognition by IF2 and preventing the misappropriation of this tRNA by the elongation apparatus. The polypeptide is Methionyl-tRNA formyltransferase (Shewanella baltica (strain OS223)).